The chain runs to 324 residues: Serine/threonine-protein phosphatase PP1 isozyme 8 (324 aa).

Mn(2+)-binding residues include Asp-66, His-68, Asp-94, and Asn-126. His-127 acts as the Proton donor in catalysis. Mn(2+) contacts are provided by His-175 and His-250.

It belongs to the PPP phosphatase family. PP-1 subfamily. The cofactor is Mn(2+). Expressed in roots, rosettes and flowers.

It is found in the nucleus. It localises to the cytoplasm. It catalyses the reaction O-phospho-L-seryl-[protein] + H2O = L-seryl-[protein] + phosphate. It carries out the reaction O-phospho-L-threonyl-[protein] + H2O = L-threonyl-[protein] + phosphate. Its activity is regulated as follows. Phosphatase activity is strongly reduced by the protein phosphatase inhibitor 2 (I-2). Functionally, serine/threonine-protein phosphatase that possesses phosphatase activity toward para-nitrophenyl phosphate (pNPP) in vitro. This Arabidopsis thaliana (Mouse-ear cress) protein is Serine/threonine-protein phosphatase PP1 isozyme 8.